Consider the following 277-residue polypeptide: Shikimate dehydrogenase (NADP(+)) (277 aa).

Residues 15–17 and Thr-62 contribute to the shikimate site; that span reads SLS. Lys-66 (proton acceptor) is an active-site residue. Residues Asn-87 and Asp-102 each contribute to the shikimate site. NADP(+) contacts are provided by residues 127–131, 151–156, and Ile-219; these read GAGGA and NRTVDK. Tyr-221 contributes to the shikimate binding site. Residue Gly-242 participates in NADP(+) binding.

This sequence belongs to the shikimate dehydrogenase family. As to quaternary structure, homodimer.

The catalysed reaction is shikimate + NADP(+) = 3-dehydroshikimate + NADPH + H(+). Its pathway is metabolic intermediate biosynthesis; chorismate biosynthesis; chorismate from D-erythrose 4-phosphate and phosphoenolpyruvate: step 4/7. Its function is as follows. Involved in the biosynthesis of the chorismate, which leads to the biosynthesis of aromatic amino acids. Catalyzes the reversible NADPH linked reduction of 3-dehydroshikimate (DHSA) to yield shikimate (SA). The chain is Shikimate dehydrogenase (NADP(+)) from Bacillus cereus (strain ATCC 10987 / NRS 248).